The following is a 299-amino-acid chain: Farnesyl diphosphate synthase (299 aa).

Residues K45, R48, and H77 each coordinate isopentenyl diphosphate. Mg(2+) contacts are provided by D84 and D90. R95 contributes to the (2E)-geranyl diphosphate binding site. Residue R96 coordinates isopentenyl diphosphate. Positions 181, 182, 220, and 237 each coordinate (2E)-geranyl diphosphate.

The protein belongs to the FPP/GGPP synthase family. Mg(2+) is required as a cofactor.

Its subcellular location is the cytoplasm. It carries out the reaction isopentenyl diphosphate + (2E)-geranyl diphosphate = (2E,6E)-farnesyl diphosphate + diphosphate. This is Farnesyl diphosphate synthase (ispA) from Escherichia coli (strain K12).